Reading from the N-terminus, the 33-residue chain is Suppressor protein HFN40 (33 aa).

In terms of biological role, suppresses expansion of husk leaf blades. This chain is Suppressor protein HFN40, found in Zea mays (Maize).